The chain runs to 163 residues: MIRQEVLHAVLDPKAVHFKQFWLSSVDRDESELLEVLCFGNYGDLNAIQSCEEWKDAIESKLRTLTLLGLCEVPSELEYDQAMASCCIPDDVILEQRMVELQAQVHFQLDSVGRRIKVLRCLGARDIYNGERPLLLLRDAARSRESTLAGLRQWKQKLQYQLR.

A PCI domain is found at 5–120; it reads EVLHAVLDPK…SVGRRIKVLR (116 aa).

Component of a COP9 signalosome-like (CSN) complex.

The protein resides in the cytoplasm. The protein localises to the nucleus. Its function is as follows. Component of the COP9 signalosome (CSN) complex that acts as a regulator of the ubiquitin (Ubl) conjugation pathway by mediating the deneddylation of the cullin subunit of SCF-type E3 ubiquitin-protein ligase complexes. The complex is involved in the regulation of the mating pheromone response. The sequence is that of COP9 signalosome complex subunit 9 (CSN9) from Eremothecium gossypii (strain ATCC 10895 / CBS 109.51 / FGSC 9923 / NRRL Y-1056) (Yeast).